The chain runs to 557 residues: Urocanate hydratase (557 aa).

NAD(+) is bound by residues 53–54 (GG), Gln131, 177–179 (GMG), Glu197, Arg202, 243–244 (NA), 264–268 (QTSAH), 274–275 (YL), and Tyr323. Cys411 is an active-site residue. Residue Gly493 coordinates NAD(+).

Belongs to the urocanase family. It depends on NAD(+) as a cofactor.

It localises to the cytoplasm. The enzyme catalyses 4-imidazolone-5-propanoate = trans-urocanate + H2O. It functions in the pathway amino-acid degradation; L-histidine degradation into L-glutamate; N-formimidoyl-L-glutamate from L-histidine: step 2/3. Its function is as follows. Catalyzes the conversion of urocanate to 4-imidazolone-5-propionate. This is Urocanate hydratase from Pseudomonas putida (strain ATCC 700007 / DSM 6899 / JCM 31910 / BCRC 17059 / LMG 24140 / F1).